Consider the following 301-residue polypeptide: Phosducin-like protein (301 aa).

T2 bears the N-acetylthreonine mark. The tract at residues 15–53 is disordered; it reads YYYSSSEEEDSDHEDKDRGRGALAGSSMPADADLAGEGI. Phosphoserine occurs at positions 20, 25, 226, 293, and 296. The Phosducin domain occupies 37–299; that stretch reads LAGSSMPADA…TCHSEDSDLE (263 aa). Residues 158-301 are thioredoxin fold; it reads FKQVFEIPSG…HSEDSDLEID (144 aa).

It belongs to the phosducin family. In terms of assembly, forms a complex with the beta and gamma subunits of the GTP-binding protein, transducin. Interacts with the CCT chaperonin complex.

The protein localises to the cell projection. Its subcellular location is the cilium. Functions as a co-chaperone for CCT in the assembly of heterotrimeric G protein complexes, facilitates the assembly of both Gbeta-Ggamma and RGS-Gbeta5 heterodimers. Also acts as a positive regulator of hedgehog signaling and regulates ciliary function. The protein is Phosducin-like protein (PDCL) of Bos taurus (Bovine).